The sequence spans 141 residues: Ribosome-binding factor A (141 aa).

The protein belongs to the RbfA family. As to quaternary structure, monomer. Binds 30S ribosomal subunits, but not 50S ribosomal subunits or 70S ribosomes.

The protein resides in the cytoplasm. One of several proteins that assist in the late maturation steps of the functional core of the 30S ribosomal subunit. Associates with free 30S ribosomal subunits (but not with 30S subunits that are part of 70S ribosomes or polysomes). Required for efficient processing of 16S rRNA. May interact with the 5'-terminal helix region of 16S rRNA. The sequence is that of Ribosome-binding factor A from Afipia carboxidovorans (strain ATCC 49405 / DSM 1227 / KCTC 32145 / OM5) (Oligotropha carboxidovorans).